Consider the following 462-residue polypeptide: Bifunctional protein HldE (462 aa).

A ribokinase region spans residues M1–P309. Residue N186 to E189 coordinates ATP. D254 is a catalytic residue. Residues F336–C462 form a cytidylyltransferase region.

In the N-terminal section; belongs to the carbohydrate kinase PfkB family. The protein in the C-terminal section; belongs to the cytidylyltransferase family. Homodimer.

The catalysed reaction is D-glycero-beta-D-manno-heptose 7-phosphate + ATP = D-glycero-beta-D-manno-heptose 1,7-bisphosphate + ADP + H(+). It catalyses the reaction D-glycero-beta-D-manno-heptose 1-phosphate + ATP + H(+) = ADP-D-glycero-beta-D-manno-heptose + diphosphate. It participates in nucleotide-sugar biosynthesis; ADP-L-glycero-beta-D-manno-heptose biosynthesis; ADP-L-glycero-beta-D-manno-heptose from D-glycero-beta-D-manno-heptose 7-phosphate: step 1/4. It functions in the pathway nucleotide-sugar biosynthesis; ADP-L-glycero-beta-D-manno-heptose biosynthesis; ADP-L-glycero-beta-D-manno-heptose from D-glycero-beta-D-manno-heptose 7-phosphate: step 3/4. In terms of biological role, catalyzes the phosphorylation of D-glycero-D-manno-heptose 7-phosphate at the C-1 position to selectively form D-glycero-beta-D-manno-heptose-1,7-bisphosphate. Catalyzes the ADP transfer from ATP to D-glycero-beta-D-manno-heptose 1-phosphate, yielding ADP-D-glycero-beta-D-manno-heptose. This Nitratiruptor sp. (strain SB155-2) protein is Bifunctional protein HldE.